We begin with the raw amino-acid sequence, 120 residues long: Large ribosomal subunit protein uL18 (120 aa).

Belongs to the universal ribosomal protein uL18 family. As to quaternary structure, part of the 50S ribosomal subunit; part of the 5S rRNA/L5/L18/L25 subcomplex. Contacts the 5S and 23S rRNAs.

This is one of the proteins that bind and probably mediate the attachment of the 5S RNA into the large ribosomal subunit, where it forms part of the central protuberance. In Bacillus licheniformis (strain ATCC 14580 / DSM 13 / JCM 2505 / CCUG 7422 / NBRC 12200 / NCIMB 9375 / NCTC 10341 / NRRL NRS-1264 / Gibson 46), this protein is Large ribosomal subunit protein uL18.